The sequence spans 531 residues: Acetate CoA-transferase YdiF (531 aa).

Glu333 functions as the 5-glutamyl coenzyme A thioester intermediate in the catalytic mechanism.

This sequence belongs to the 3-oxoacid CoA-transferase family. In terms of assembly, homotetramer; dimer of dimers.

The enzyme catalyses an acyl-CoA + acetate = a carboxylate + acetyl-CoA. Functionally, coA transferase having broad substrate specificity for short-chain acyl-CoA thioesters with the activity decreasing when the length of the carboxylic acid chain exceeds four carbons. Exhibits high activity with acetoacetyl-CoA, propionyl-CoA, crotonoyl-CoA or butyryl-CoA as donors, with acetate as an acceptor. When acetyl-CoA is used as the donor, propionate, acetoacetate, butyrate, isobutyrate, and 4-hydroxybutyrate can be utilized as acceptors but not isovalerate. May play a role in short-chain fatty acid metabolism in E.coli. The polypeptide is Acetate CoA-transferase YdiF (Escherichia coli O157:H7).